The sequence spans 330 residues: Zinc finger protein Gfi-1b (330 aa).

Residues Met1–Ala20 are SNAG domain. 2 disordered regions span residues Met1–Gln21 and Met75–Pro99. At Lys8 the chain carries N6,N6-dimethyllysine. Residues Gly91–Lys330 form an interaction with ARIH2 region. 6 consecutive C2H2-type zinc fingers follow at residues Tyr163–His186, Phe192–His214, Phe220–His242, Tyr248–His270, His276–His298, and Phe304–His327. Residues His164–Lys330 form a mediates interaction with GATA1 region.

Interacts with histone methyltransferases EHMT2 and SUV39H1. Interacts with ARIH2 (via RING-type 2) and with RUNX1T1. Forms a complex with GATA1. Component of a RCOR-GFI-KDM1A-HDAC complex. Interacts directly with RCOR1, KDM1A and HDAC2. In terms of processing, methylation at Lys-8 in the SNAG domain seems required for the recruitment of the corepressor complex. Expressed in bone marrow and in spleen. Detected in hematopoietic stem cells, erythroblasts, and megakaryocytes. Expressed in thymocytes.

The protein localises to the nucleus. In terms of biological role, essential proto-oncogenic transcriptional regulator necessary for development and differentiation of erythroid and megakaryocytic lineages. Component of a RCOR-GFI-KDM1A-HDAC complex that suppresses, via histone deacetylase (HDAC) recruitment, a number of genes implicated in multilineage blood cell development and controls hematopoietic differentiation. Transcriptional repressor or activator depending on both promoter and cell type context; represses promoter activity of SOCS1 and SOCS3 and thus, may regulate cytokine signaling pathways. Cooperates with GATA1 to repress target gene transcription, such as the apoptosis regulator BCL2L1; GFI1B silencing in leukemic cell lines markedly increase apoptosis rate. Inhibits down-regulation of MYC and MYB as well as the cyclin-dependent kinase inhibitor CDKN1A/P21WAF1 in IL6-treated myelomonocytic cells. Represses expression of GATA3 in T-cell lymphomas and inhibits GATA1-mediated transcription; as GATA1 also mediates erythroid GFI1B transcription, both GATA1 and GFI1B participate in a feedback regulatory pathway controlling the expression of GFI1B gene in erythroid cells. Suppresses GATA1-mediated stimulation of GFI1B promoter through protein interaction. Binds to gamma-satellite DNA and to its own promoter, auto-repressing its own expression. Alters histone methylation by recruiting histone methyltransferase to target genes promoters. Plays a role in heterochromatin formation. The sequence is that of Zinc finger protein Gfi-1b (Gfi1b) from Mus musculus (Mouse).